Reading from the N-terminus, the 540-residue chain is Glucose-6-phosphate isomerase (540 aa).

The active-site Proton donor is glutamate 350. Catalysis depends on residues histidine 381 and lysine 503.

It belongs to the GPI family.

It is found in the cytoplasm. The enzyme catalyses alpha-D-glucose 6-phosphate = beta-D-fructose 6-phosphate. The protein operates within carbohydrate biosynthesis; gluconeogenesis. It participates in carbohydrate degradation; glycolysis; D-glyceraldehyde 3-phosphate and glycerone phosphate from D-glucose: step 2/4. Functionally, catalyzes the reversible isomerization of glucose-6-phosphate to fructose-6-phosphate. The sequence is that of Glucose-6-phosphate isomerase from Burkholderia orbicola (strain AU 1054).